Here is a 603-residue protein sequence, read N- to C-terminus: MVLRLSQLFLRTLREDPVDAEVDSHKLLVRAGYIRRAAPGIYTWLPLGLSVLRKVEDIIRQEMSAIGAQEVHFPALLPREPYEATNRWTEYGEGLFRLQDRKGADYLLAPTHEEMFTLLVKDLYSSYKDLPLSLYQIQNKYRDEARPRAGLLRGREFIMKDSYSFDIDDAGLDASYAAHRAAYLKIFERLGLEVIPVAATAGAMGGSKSEEFLFPTEIGEDTFVRSAGGYYANVEAVTTVVPDEIDFSNAPAAEVLDTPNTPTIDTLVDAANQLAPRSESDGGAWTAADTLKNVVLAVTLPTGERQIVVIGVPGDRGVDLKRVEANIGSHLPIAGEIGLEAANEEDLKKLPWLVKGYIGPGLSLDEPVLGLEGSSKVLFLVDPRVVSGTTWVTGANAEGKHVFGLVAGRDFVWDGVIESTEVRAGDPAPDGSGPLETARGIEMGHIFQLGRKYAEALDLKVLDQNGKQQVVTMGSYGVGVTRAVAALAEANNDDRGLVWPRSVAPADVHVVAVGRGDEIFEAAEKLSLELEAAGLDVIFDDRPKVSPGVKFGDAELVGVPTILAVGRGLVDGVVEIKDRRSGEAENISVDKAVDYVVNAVRTR.

Belongs to the class-II aminoacyl-tRNA synthetase family. ProS type 1 subfamily. In terms of assembly, homodimer.

It is found in the cytoplasm. It catalyses the reaction tRNA(Pro) + L-proline + ATP = L-prolyl-tRNA(Pro) + AMP + diphosphate. Its function is as follows. Catalyzes the attachment of proline to tRNA(Pro) in a two-step reaction: proline is first activated by ATP to form Pro-AMP and then transferred to the acceptor end of tRNA(Pro). As ProRS can inadvertently accommodate and process non-cognate amino acids such as alanine and cysteine, to avoid such errors it has two additional distinct editing activities against alanine. One activity is designated as 'pretransfer' editing and involves the tRNA(Pro)-independent hydrolysis of activated Ala-AMP. The other activity is designated 'posttransfer' editing and involves deacylation of mischarged Ala-tRNA(Pro). The misacylated Cys-tRNA(Pro) is not edited by ProRS. The polypeptide is Proline--tRNA ligase (Paenarthrobacter aurescens (strain TC1)).